The following is a 105-amino-acid chain: Large ribosomal subunit protein bL21 (105 aa).

This sequence belongs to the bacterial ribosomal protein bL21 family. Part of the 50S ribosomal subunit. Contacts protein L20.

This protein binds to 23S rRNA in the presence of protein L20. The chain is Large ribosomal subunit protein bL21 from Rickettsia bellii (strain OSU 85-389).